A 94-amino-acid polypeptide reads, in one-letter code: Small ribosomal subunit protein bS18 (94 aa).

Residues 1-12 (MSEQNSRPQNSE) show a composition bias toward low complexity. The tract at residues 1–29 (MSEQNSRPQNSERPQRSRRPQGGPRRRRK) is disordered. Positions 16–29 (RSRRPQGGPRRRRK) are enriched in basic residues.

It belongs to the bacterial ribosomal protein bS18 family. In terms of assembly, part of the 30S ribosomal subunit. Forms a tight heterodimer with protein bS6.

In terms of biological role, binds as a heterodimer with protein bS6 to the central domain of the 16S rRNA, where it helps stabilize the platform of the 30S subunit. In Leuconostoc citreum (strain KM20), this protein is Small ribosomal subunit protein bS18.